We begin with the raw amino-acid sequence, 250 residues long: Ubiquinone/menaquinone biosynthesis C-methyltransferase UbiE (250 aa).

S-adenosyl-L-methionine is bound by residues T74, D94, 122–123 (DA), and S139.

The protein belongs to the class I-like SAM-binding methyltransferase superfamily. MenG/UbiE family.

It carries out the reaction a 2-demethylmenaquinol + S-adenosyl-L-methionine = a menaquinol + S-adenosyl-L-homocysteine + H(+). The catalysed reaction is a 2-methoxy-6-(all-trans-polyprenyl)benzene-1,4-diol + S-adenosyl-L-methionine = a 5-methoxy-2-methyl-3-(all-trans-polyprenyl)benzene-1,4-diol + S-adenosyl-L-homocysteine + H(+). It functions in the pathway quinol/quinone metabolism; menaquinone biosynthesis; menaquinol from 1,4-dihydroxy-2-naphthoate: step 2/2. The protein operates within cofactor biosynthesis; ubiquinone biosynthesis. Its function is as follows. Methyltransferase required for the conversion of demethylmenaquinol (DMKH2) to menaquinol (MKH2) and the conversion of 2-polyprenyl-6-methoxy-1,4-benzoquinol (DDMQH2) to 2-polyprenyl-3-methyl-6-methoxy-1,4-benzoquinol (DMQH2). This chain is Ubiquinone/menaquinone biosynthesis C-methyltransferase UbiE, found in Ruegeria sp. (strain TM1040) (Silicibacter sp.).